Here is a 496-residue protein sequence, read N- to C-terminus: Cytochrome P450 71D180 (496 aa).

A helical; Signal-anchor for type II membrane protein transmembrane segment spans residues 1–21 (MDISISWVVIIVFVLSYLILM). Residue Cys-435 participates in heme binding. The interval 471–496 (MSETPGLSGPRKNPLIMIPTIHNPTS) is disordered.

The protein belongs to the cytochrome P450 family. Heme is required as a cofactor.

Its subcellular location is the membrane. It carries out the reaction gamma-terpinene + 2 reduced [NADPH--hemoprotein reductase] + 2 O2 = carvacrol + 2 oxidized [NADPH--hemoprotein reductase] + 3 H2O + 2 H(+). The catalysed reaction is (4S)-limonene + reduced [NADPH--hemoprotein reductase] + O2 = (1S,5R)-carveol + oxidized [NADPH--hemoprotein reductase] + H2O + H(+). The enzyme catalyses (4R)-limonene + reduced [NADPH--hemoprotein reductase] + O2 = (1R,5S)-carveol + oxidized [NADPH--hemoprotein reductase] + H2O + H(+). Its pathway is secondary metabolite biosynthesis; terpenoid biosynthesis. Functionally, involved in the biosynthesis of phenolic monoterpenes natural products thymol and carvacrol which have a broad range of biological activities acting as antimicrobial compounds, insecticides, antioxidants and pharmaceutical agents. Catalyzes the C2-hydroxylation of gamma-terpinene to produce carvacrol. Mediates also the C6-hydroxylation of (4S)-limonene and (4R)-limonene to form carveol. In Origanum majorana (Sweet marjoram), this protein is Cytochrome P450 71D180.